The sequence spans 76 residues: High-potential iron-sulfur protein isozyme 2 (76 aa).

[4Fe-4S] cluster is bound by residues cysteine 38, cysteine 41, cysteine 54, and cysteine 70.

It belongs to the high-potential iron-sulfur protein (HiPIP) family. In terms of assembly, homodimer.

Its function is as follows. Specific class of high-redox-potential 4Fe-4S ferredoxins. Functions in anaerobic electron transport in most purple and in some other photosynthetic bacteria and in at least one genus (Paracoccus) of halophilic, denitrifying bacteria. This is High-potential iron-sulfur protein isozyme 2 (hip2) from Halorhodospira halophila (Ectothiorhodospira halophila).